The primary structure comprises 489 residues: UDP-N-acetylmuramate--L-alanine ligase (489 aa).

ATP is bound at residue 128–134 (GTHGKTT).

This sequence belongs to the MurCDEF family.

It is found in the cytoplasm. It catalyses the reaction UDP-N-acetyl-alpha-D-muramate + L-alanine + ATP = UDP-N-acetyl-alpha-D-muramoyl-L-alanine + ADP + phosphate + H(+). Its pathway is cell wall biogenesis; peptidoglycan biosynthesis. In terms of biological role, cell wall formation. This Shewanella pealeana (strain ATCC 700345 / ANG-SQ1) protein is UDP-N-acetylmuramate--L-alanine ligase.